The sequence spans 72 residues: Gas vesicle protein A (72 aa).

The protein belongs to the gas vesicle GvpA family. In terms of assembly, the gas vesicle shell is 2 nm thick and consists of a single layer of this protein. It forms helical ribs nearly perpendicular to the long axis of the vesicle.

Its subcellular location is the gas vesicle shell. Its function is as follows. Gas vesicles are hollow, gas filled proteinaceous nanostructures found in some microorganisms. During planktonic growth they allow positioning of the organism at a favorable depth for light or nutrient acquisition. GvpA forms the protein shell. The chain is Gas vesicle protein A from Synechococcus sp. (strain JA-3-3Ab) (Cyanobacteria bacterium Yellowstone A-Prime).